A 212-amino-acid chain; its full sequence is Probable nicotinate-nucleotide adenylyltransferase (212 aa).

It belongs to the NadD family.

It catalyses the reaction nicotinate beta-D-ribonucleotide + ATP + H(+) = deamido-NAD(+) + diphosphate. Its pathway is cofactor biosynthesis; NAD(+) biosynthesis; deamido-NAD(+) from nicotinate D-ribonucleotide: step 1/1. Functionally, catalyzes the reversible adenylation of nicotinate mononucleotide (NaMN) to nicotinic acid adenine dinucleotide (NaAD). This chain is Probable nicotinate-nucleotide adenylyltransferase, found in Chromobacterium violaceum (strain ATCC 12472 / DSM 30191 / JCM 1249 / CCUG 213 / NBRC 12614 / NCIMB 9131 / NCTC 9757 / MK).